We begin with the raw amino-acid sequence, 609 residues long: Glutamine--fructose-6-phosphate aminotransferase [isomerizing] (609 aa).

The active-site Nucleophile; for GATase activity is the Cys2. Residues 2-218 form the Glutamine amidotransferase type-2 domain; that stretch reads CGIVGAIAQR…EGDIAEITRR (217 aa). SIS domains follow at residues 286 to 426 and 458 to 599; these read ADEL…LKGL and LAED…VDQP. Catalysis depends on Lys604, which acts as the For Fru-6P isomerization activity.

In terms of assembly, homodimer.

It localises to the cytoplasm. It catalyses the reaction D-fructose 6-phosphate + L-glutamine = D-glucosamine 6-phosphate + L-glutamate. Functionally, catalyzes the first step in hexosamine metabolism, converting fructose-6P into glucosamine-6P using glutamine as a nitrogen source. The polypeptide is Glutamine--fructose-6-phosphate aminotransferase [isomerizing] (Salmonella typhimurium (strain LT2 / SGSC1412 / ATCC 700720)).